The sequence spans 992 residues: Disks large-associated protein 4 (992 aa).

The segment covering 1–20 has biased composition (basic and acidic residues); that stretch reads MKGLGDSRPRHLSDSLDPPH. Disordered regions lie at residues 1 to 31 and 154 to 226; these read MKGL…DRNP and APSM…ASGL. A compositionally biased stretch (gly residues) spans 162 to 171; sequence GKVGGNGGKK. Positions 172–194 are enriched in basic and acidic residues; it reads GVLEDGKGRRAKSKERAKAGEPK. Over residues 199–208 the composition is skewed to polar residues; the sequence is SNISGWWSSD. Phosphoserine occurs at positions 206 and 207. R290 carries the omega-N-methylarginine modification. Disordered stretches follow at residues 342-435, 527-665, 677-751, 763-798, and 915-992; these read TTLL…SWEE, SVSL…RKLS, VPKE…GPRQ, SYGD…AQPG, and TPEK…QTRL. Residues S377, S380, S384, S388, S405, S415, and S421 each carry the phosphoserine modification. The span at 399 to 413 shows a compositional bias: polar residues; it reads LRATQQSLGEQSNPR. The segment covering 528–554 has biased composition (low complexity); it reads VSLQSLSPPPSTGSLSNSRTLPSSSCL. The segment covering 576-591 has biased composition (polar residues); that stretch reads VTVQSSTESAQDTYLD. Phosphoserine occurs at positions 580, 581, 609, 611, 665, and 744. Residues 600–620 show a composition bias toward low complexity; it reads TSQSGLSNSSDSLDSSTRPPS. T915 is modified (phosphothreonine). Basic and acidic residues-rich tracts occupy residues 915 to 925 and 940 to 958; these read TPEKRKEEKKP and VSRD…EARK. Residues 969-978 show a composition bias toward polar residues; that stretch reads VRQNSATESA. S973 carries the phosphoserine modification.

The protein belongs to the SAPAP family. Interacts with DLG1 and DLG4/PSD-95. As to expression, expressed in brain.

It localises to the membrane. Functionally, may play a role in the molecular organization of synapses and neuronal cell signaling. Could be an adapter protein linking ion channel to the subsynaptic cytoskeleton. May induce enrichment of PSD-95/SAP90 at the plasma membrane. In Rattus norvegicus (Rat), this protein is Disks large-associated protein 4 (Dlgap4).